The primary structure comprises 470 residues: V-type ATP synthase beta chain (470 aa).

It belongs to the ATPase alpha/beta chains family.

Functionally, produces ATP from ADP in the presence of a proton gradient across the membrane. The V-type beta chain is a regulatory subunit. The protein is V-type ATP synthase beta chain of Deinococcus geothermalis (strain DSM 11300 / CIP 105573 / AG-3a).